The chain runs to 352 residues: Chymopapain (352 aa).

A signal peptide spans 1-18 (MATMSSISKIIFLATCLI). Positions 19-134 (IHMGLSSADF…EDFTYKHVTN (116 aa)) are cleaved as a propeptide — activation peptide. N-linked (GlcNAc...) asparagine glycosylation occurs at Asn-86. 3 disulfide bridges follow: Cys-156–Cys-197, Cys-190–Cys-229, and Cys-287–Cys-338. Residue Cys-159 is part of the active site. Active-site residues include His-293 and Asn-313.

It belongs to the peptidase C1 family.

It catalyses the reaction Specificity similar to that of papain.. In terms of biological role, cysteine proteinase with a high level of diversity in substrate specificity. This Carica papaya (Papaya) protein is Chymopapain.